Consider the following 379-residue polypeptide: Anhydro-N-acetylmuramic acid kinase (379 aa).

9–16 (GTSADGVD) contacts ATP.

It belongs to the anhydro-N-acetylmuramic acid kinase family.

The catalysed reaction is 1,6-anhydro-N-acetyl-beta-muramate + ATP + H2O = N-acetyl-D-muramate 6-phosphate + ADP + H(+). It participates in amino-sugar metabolism; 1,6-anhydro-N-acetylmuramate degradation. It functions in the pathway cell wall biogenesis; peptidoglycan recycling. Its function is as follows. Catalyzes the specific phosphorylation of 1,6-anhydro-N-acetylmuramic acid (anhMurNAc) with the simultaneous cleavage of the 1,6-anhydro ring, generating MurNAc-6-P. Is required for the utilization of anhMurNAc either imported from the medium or derived from its own cell wall murein, and thus plays a role in cell wall recycling. The chain is Anhydro-N-acetylmuramic acid kinase from Parasynechococcus marenigrum (strain WH8102).